The following is a 357-amino-acid chain: Membrane-bound lytic murein transglycosylase C (357 aa).

A signal peptide spans 1–16 (MKKMLALLVIAPLLVS). Residue cysteine 17 is the site of N-palmitoyl cysteine attachment. The S-diacylglycerol cysteine moiety is linked to residue cysteine 17.

Belongs to the transglycosylase Slt family.

It is found in the cell outer membrane. It carries out the reaction Exolytic cleavage of the (1-&gt;4)-beta-glycosidic linkage between N-acetylmuramic acid (MurNAc) and N-acetylglucosamine (GlcNAc) residues in peptidoglycan, from either the reducing or the non-reducing ends of the peptidoglycan chains, with concomitant formation of a 1,6-anhydrobond in the MurNAc residue.. Murein-degrading enzyme. May play a role in recycling of muropeptides during cell elongation and/or cell division. The protein is Membrane-bound lytic murein transglycosylase C of Pectobacterium atrosepticum (strain SCRI 1043 / ATCC BAA-672) (Erwinia carotovora subsp. atroseptica).